Reading from the N-terminus, the 265-residue chain is Mlc titration factor A (265 aa).

Positions 111, 148, 152, and 211 each coordinate Zn(2+).

This sequence belongs to the MtfA family. In terms of assembly, interacts with Mlc. It depends on Zn(2+) as a cofactor.

The protein resides in the cytoplasm. Functionally, involved in the modulation of the activity of the glucose-phosphotransferase system (glucose-PTS). Interacts with the transcriptional repressor Mlc, preventing its interaction with DNA and leading to the modulation of expression of genes regulated by Mlc, including ptsG, which encodes the PTS system glucose-specific EIICB component. Shows zinc-dependent metallopeptidase activity. The polypeptide is Mlc titration factor A (Escherichia coli O139:H28 (strain E24377A / ETEC)).